The primary structure comprises 1005 residues: Small G protein signaling modulator 2 (1005 aa).

The 158-residue stretch at 34 to 191 (HEDSSHIIAL…EYTKLKTADH (158 aa)) folds into the RUN domain. 2 disordered regions span residues 95 to 121 (QAEG…KAPA) and 205 to 236 (HRIR…SASE). A phosphoserine mark is found at serine 402 and leucine 444. Positions 566-938 (GVEHEIRKDV…AVWEVIWAAR (373 aa)) constitute a Rab-GAP TBC domain. Disordered regions lie at residues 657 to 687 (FISV…AGTP) and 729 to 761 (GFED…QETL). Basic and acidic residues predominate over residues 672-681 (EDSKPKREQE). Acidic residues predominate over residues 730–740 (FEDDGAGEDGS).

Belongs to the RUTBC family. Interacts with RAB4A, RAB11A, RAP1A, RAP1B, RAP2A and RAP2B. No interaction with RAB27A. Interacts with RAB9A. As to expression, widely expressed.

It localises to the cytoplasm. The protein localises to the melanosome. In terms of biological role, possesses GTPase activator activity towards RAB32, RAB33B and RAB38. Regulates the trafficking of melanogenic enzymes TYR, TYRP1 and DCT/TYRP2 to melanosomes in melanocytes by inactivating RAB32 and RAB38. Inhibits RAB32 and RAB38 activation both directly by promoting their GTPase activity and indirectly by disrupting the RAB9A-HPS4 interaction which is required for RAB32/38 activation. This chain is Small G protein signaling modulator 2 (Sgsm2), found in Mus musculus (Mouse).